Here is a 284-residue protein sequence, read N- to C-terminus: UPF0294 protein VV2535 (284 aa).

It belongs to the UPF0294 family.

Its subcellular location is the cytoplasm. This chain is UPF0294 protein VV2535, found in Vibrio vulnificus (strain YJ016).